The sequence spans 118 residues: Large ribosomal subunit protein bL19 (118 aa).

The protein belongs to the bacterial ribosomal protein bL19 family.

Its function is as follows. This protein is located at the 30S-50S ribosomal subunit interface and may play a role in the structure and function of the aminoacyl-tRNA binding site. The sequence is that of Large ribosomal subunit protein bL19 from Frankia casuarinae (strain DSM 45818 / CECT 9043 / HFP020203 / CcI3).